Here is a 582-residue protein sequence, read N- to C-terminus: Aspartate--tRNA ligase (582 aa).

Residues 198–201 are aspartate; the sequence is QIFK. Arg220 contributes to the L-aspartate binding site. ATP-binding positions include 220-222 and Gln229; that span reads RDE. Position 445 (His445) interacts with L-aspartate. Glu479 lines the ATP pocket. Arg486 is an L-aspartate binding site. Residue 531 to 534 participates in ATP binding; the sequence is GFDR.

The protein belongs to the class-II aminoacyl-tRNA synthetase family. Type 1 subfamily. In terms of assembly, homodimer.

It is found in the cytoplasm. The catalysed reaction is tRNA(Asp) + L-aspartate + ATP = L-aspartyl-tRNA(Asp) + AMP + diphosphate. Functionally, catalyzes the attachment of L-aspartate to tRNA(Asp) in a two-step reaction: L-aspartate is first activated by ATP to form Asp-AMP and then transferred to the acceptor end of tRNA(Asp). The polypeptide is Aspartate--tRNA ligase (Amoebophilus asiaticus (strain 5a2)).